A 425-amino-acid polypeptide reads, in one-letter code: Histone-binding protein RBBP4-B (425 aa).

An N-acetylalanine modification is found at A2. WD repeat units lie at residues 32–125, 126–175, 176–223, 225–270, 271–314, 315–371, and 372–404; these read YDLV…NHEG, EVNR…RLRG, HQKE…KTIF, GHTA…HSVD, AHTA…HSFE, SHKD…FIHG, and GHTAKISDFSWNPNEPWVICSVSEDNIMQVWQM.

This sequence belongs to the WD repeat RBAP46/RBAP48/MSI1 family. As to quaternary structure, binds directly to histone H4, probably via helix 1 of the histone fold, a region that is not accessible when histone H4 is in chromatin. Probably forms a large corepressor complex that contains ncor1, sin3a, hdac1-A and/or hdac1-B, hdac2, rbbp4-A and/or rbbp4-B and possibly rbbp7.

It is found in the nucleus. The protein resides in the chromosome. The protein localises to the telomere. Functionally, core histone-binding subunit that may target chromatin assembly factors, chromatin remodeling factors and histone deacetylases to their histone substrates in a manner that is regulated by nucleosomal DNA. Component of several complexes which regulate chromatin metabolism. This Xenopus laevis (African clawed frog) protein is Histone-binding protein RBBP4-B (rbbp4-b).